The primary structure comprises 473 residues: Siroheme synthase (473 aa).

A precorrin-2 dehydrogenase /sirohydrochlorin ferrochelatase region spans residues 1 to 222 (MNTQPHHSSP…GDESRADARL (222 aa)). Residues 37–38 (EI) and 58–59 (EK) contribute to the NAD(+) site. Residues 233-473 (GEVWLVGAGP…QVVRHRVVSP (241 aa)) are uroporphyrinogen-III C-methyltransferase. Pro242 is an S-adenosyl-L-methionine binding site. Residue Asp265 is the Proton acceptor of the active site. Lys287 acts as the Proton donor in catalysis. S-adenosyl-L-methionine is bound by residues 318 to 320 (GGD), Ile323, 348 to 349 (SA), Met401, and Gly430.

This sequence in the N-terminal section; belongs to the precorrin-2 dehydrogenase / sirohydrochlorin ferrochelatase family. In the C-terminal section; belongs to the precorrin methyltransferase family.

The catalysed reaction is uroporphyrinogen III + 2 S-adenosyl-L-methionine = precorrin-2 + 2 S-adenosyl-L-homocysteine + H(+). It catalyses the reaction precorrin-2 + NAD(+) = sirohydrochlorin + NADH + 2 H(+). The enzyme catalyses siroheme + 2 H(+) = sirohydrochlorin + Fe(2+). Its pathway is cofactor biosynthesis; adenosylcobalamin biosynthesis; precorrin-2 from uroporphyrinogen III: step 1/1. It participates in cofactor biosynthesis; adenosylcobalamin biosynthesis; sirohydrochlorin from precorrin-2: step 1/1. The protein operates within porphyrin-containing compound metabolism; siroheme biosynthesis; precorrin-2 from uroporphyrinogen III: step 1/1. It functions in the pathway porphyrin-containing compound metabolism; siroheme biosynthesis; siroheme from sirohydrochlorin: step 1/1. Its pathway is porphyrin-containing compound metabolism; siroheme biosynthesis; sirohydrochlorin from precorrin-2: step 1/1. In terms of biological role, multifunctional enzyme that catalyzes the SAM-dependent methylations of uroporphyrinogen III at position C-2 and C-7 to form precorrin-2 via precorrin-1. Then it catalyzes the NAD-dependent ring dehydrogenation of precorrin-2 to yield sirohydrochlorin. Finally, it catalyzes the ferrochelation of sirohydrochlorin to yield siroheme. The protein is Siroheme synthase of Gluconobacter oxydans (strain 621H) (Gluconobacter suboxydans).